Reading from the N-terminus, the 631-residue chain is Phosphomethylpyrimidine synthase (631 aa).

Substrate-binding positions include Asn-239, Met-268, Tyr-297, His-333, 353–355, 394–397, and Glu-433; these read SRG and DGLR. His-437 contributes to the Zn(2+) binding site. Tyr-460 contacts substrate. His-501 contacts Zn(2+). [4Fe-4S] cluster is bound by residues Cys-581, Cys-584, and Cys-589.

This sequence belongs to the ThiC family. Homodimer. It depends on [4Fe-4S] cluster as a cofactor.

The catalysed reaction is 5-amino-1-(5-phospho-beta-D-ribosyl)imidazole + S-adenosyl-L-methionine = 4-amino-2-methyl-5-(phosphooxymethyl)pyrimidine + CO + 5'-deoxyadenosine + formate + L-methionine + 3 H(+). Its pathway is cofactor biosynthesis; thiamine diphosphate biosynthesis. Functionally, catalyzes the synthesis of the hydroxymethylpyrimidine phosphate (HMP-P) moiety of thiamine from aminoimidazole ribotide (AIR) in a radical S-adenosyl-L-methionine (SAM)-dependent reaction. This is Phosphomethylpyrimidine synthase from Escherichia coli O6:H1 (strain CFT073 / ATCC 700928 / UPEC).